A 501-amino-acid polypeptide reads, in one-letter code: Cytochrome P450 81F4 (501 aa).

Lysine 245 is covalently cross-linked (Glycyl lysine isopeptide (Lys-Gly) (interchain with G-Cter in ubiquitin)). A helical transmembrane segment spans residues 285 to 305; the sequence is IIIKGLMLGIMVASSETSALT. Cysteine 435 is a binding site for heme.

Belongs to the cytochrome P450 family. It depends on heme as a cofactor.

It is found in the membrane. It functions in the pathway secondary metabolite biosynthesis. Involved in indole glucosinolate biosynthesis. Catalyzes hydroxylation reactions of the glucosinolate indole ring. Converts indol-3-yl-methylglucosinolate (I3M) to 1-hydroxy-indol-3-yl-methylglucosinolate (1OH-I3M) intermediate. This hydroxy intermediates is converted to 1-methoxy-indol-3-yl-methylglucosinolate (1MO-I3M) by indole glucosinolate methyltransferase 1 and 2 (IGMT1 and IGMT2). This chain is Cytochrome P450 81F4, found in Arabidopsis thaliana (Mouse-ear cress).